Reading from the N-terminus, the 230-residue chain is MKIGIIGAMEPEVAHLIASMTDTQTQTIAGIEFVAGQLEGKEVIVTRSGIGKVTASVATTLLIEKYAPDYVINTGSAGGFVDSLAIGDIVISSEVRHHDVDVTAFGYEIGQMAQQPAAFMPDRTLVEAAKKAVADLGEVKAIEGLICTGDSFICDPERTKVMLNNFPTMAACEMEGAAIAQVCHQFKVPFVVIRSLSDNANNDSPVDFDSYLVKAGHHSALMVISLLKHL.

The active-site Proton acceptor is the E12. Substrate-binding positions include G78, I153, and 174 to 175; that span reads ME. D198 serves as the catalytic Proton donor.

This sequence belongs to the PNP/UDP phosphorylase family. MtnN subfamily.

The catalysed reaction is S-adenosyl-L-homocysteine + H2O = S-(5-deoxy-D-ribos-5-yl)-L-homocysteine + adenine. It catalyses the reaction S-methyl-5'-thioadenosine + H2O = 5-(methylsulfanyl)-D-ribose + adenine. The enzyme catalyses 5'-deoxyadenosine + H2O = 5-deoxy-D-ribose + adenine. Its pathway is amino-acid biosynthesis; L-methionine biosynthesis via salvage pathway; S-methyl-5-thio-alpha-D-ribose 1-phosphate from S-methyl-5'-thioadenosine (hydrolase route): step 1/2. In terms of biological role, catalyzes the irreversible cleavage of the glycosidic bond in both 5'-methylthioadenosine (MTA) and S-adenosylhomocysteine (SAH/AdoHcy) to adenine and the corresponding thioribose, 5'-methylthioribose and S-ribosylhomocysteine, respectively. Also cleaves 5'-deoxyadenosine, a toxic by-product of radical S-adenosylmethionine (SAM) enzymes, into 5-deoxyribose and adenine. This is 5'-methylthioadenosine/S-adenosylhomocysteine nucleosidase from Shewanella loihica (strain ATCC BAA-1088 / PV-4).